Here is a 238-residue protein sequence, read N- to C-terminus: Ribonuclease 3 (238 aa).

An RNase III domain is found at 17 to 140 (YATLEKALGY…LMAGVYLEAG (124 aa)). Glutamate 53 contacts Mg(2+). Aspartate 57 is a catalytic residue. Mg(2+) contacts are provided by serine 126 and glutamate 129. Glutamate 129 is a catalytic residue. In terms of domain architecture, DRBM spans 167-236 (DYKTALQELT…AYQALQKLKE (70 aa)).

The protein belongs to the ribonuclease III family. In terms of assembly, homodimer. Mg(2+) serves as cofactor.

The protein resides in the cytoplasm. It catalyses the reaction Endonucleolytic cleavage to 5'-phosphomonoester.. Its function is as follows. Digests double-stranded RNA. Involved in the processing of primary rRNA transcript to yield the immediate precursors to the large and small rRNAs (23S and 16S). Processes some mRNAs, and tRNAs when they are encoded in the rRNA operon. Processes pre-crRNA and tracrRNA of type II CRISPR loci if present in the organism. This Helicobacter pylori (strain Shi470) protein is Ribonuclease 3.